The following is a 95-amino-acid chain: Aspartyl/glutamyl-tRNA(Asn/Gln) amidotransferase subunit C (95 aa).

The segment at 74–95 (GQALEPAPDADNEHFLVPQVVE) is disordered.

Belongs to the GatC family. In terms of assembly, heterotrimer of A, B and C subunits.

The catalysed reaction is L-glutamyl-tRNA(Gln) + L-glutamine + ATP + H2O = L-glutaminyl-tRNA(Gln) + L-glutamate + ADP + phosphate + H(+). The enzyme catalyses L-aspartyl-tRNA(Asn) + L-glutamine + ATP + H2O = L-asparaginyl-tRNA(Asn) + L-glutamate + ADP + phosphate + 2 H(+). Allows the formation of correctly charged Asn-tRNA(Asn) or Gln-tRNA(Gln) through the transamidation of misacylated Asp-tRNA(Asn) or Glu-tRNA(Gln) in organisms which lack either or both of asparaginyl-tRNA or glutaminyl-tRNA synthetases. The reaction takes place in the presence of glutamine and ATP through an activated phospho-Asp-tRNA(Asn) or phospho-Glu-tRNA(Gln). This is Aspartyl/glutamyl-tRNA(Asn/Gln) amidotransferase subunit C from Salinibacter ruber (strain DSM 13855 / M31).